Consider the following 394-residue polypeptide: HORMA domain-containing protein 1 (394 aa).

The HORMA domain maps to 24 to 226 (HQSLVLVKRL…TPFHIFKVKV (203 aa)). Positions 253–282 (ILRDKDVEDEQEHYTSDDLDIETKMEEQEK) are enriched in basic and acidic residues. Residues 253–394 (ILRDKDVEDE…RKFSEPKEHI (142 aa)) are disordered. Positions 288 to 300 (ELEEPSLVCEEDE) are enriched in acidic residues. Polar residues-rich tracts occupy residues 310–324 (LSISHSQVEQLVNKT) and 343–352 (KMANGNQPVK). The span at 362–374 (QHESGRIVLHHFD) shows a compositional bias: basic and acidic residues. S376 is subject to Phosphoserine. A Nuclear localization signal motif is present at residues 383–386 (KRRK).

As to quaternary structure, interacts with HORMAD2. Interacts with IHO1. Post-translationally, phosphorylated at Ser-377 in a SPO11-dependent manner. As to expression, testis-specific. Over-expressed in carcinomas.

The protein localises to the nucleus. Its subcellular location is the chromosome. Functionally, plays a key role in meiotic progression. Regulates 3 different functions during meiosis: ensures that sufficient numbers of processed DNA double-strand breaks (DSBs) are available for successful homology search by increasing the steady-state numbers of single-stranded DSB ends. Promotes synaptonemal-complex formation independently of its role in homology search. Plays a key role in the male mid-pachytene checkpoint and the female meiotic prophase checkpoint: required for efficient build-up of ATR activity on unsynapsed chromosome regions, a process believed to form the basis of meiotic silencing of unsynapsed chromatin (MSUC) and meiotic prophase quality control in both sexes. The protein is HORMA domain-containing protein 1 of Homo sapiens (Human).